A 53-amino-acid polypeptide reads, in one-letter code: MRDIIKLTCGNCGRANYHTTKNKRTMTDKFVIKKFCPTERKHTEHKEGKISKG.

This sequence belongs to the bacterial ribosomal protein bL33 family.

This Sorangium cellulosum (strain So ce56) (Polyangium cellulosum (strain So ce56)) protein is Large ribosomal subunit protein bL33B.